The chain runs to 162 residues: AP-1 complex subunit sigma-2 (162 aa).

This sequence belongs to the adaptor complexes small subunit family. In terms of assembly, adaptor protein complex 1 (AP-1) is a heterotetramer composed of two large adaptins (gamma-type subunit and beta-type subunit), a medium adaptin (mu-type subunit) and a small adaptin (sigma-type subunit). In terms of tissue distribution, expressed in roots, stems, leaves, flowers and siliques (developing fruits and seeds).

It is found in the golgi apparatus. It localises to the cytoplasmic vesicle. The protein localises to the clathrin-coated vesicle membrane. Subunit of clathrin-associated adaptor protein complex 1 that plays a role in protein sorting at the trans-Golgi network and early endosomes (TGN/EE). The AP complexes mediate the recruitment of clathrin to membranes and the recognition of sorting signals within the cytosolic tails of transmembrane cargo molecules. This chain is AP-1 complex subunit sigma-2 (AAP19-2), found in Arabidopsis thaliana (Mouse-ear cress).